The chain runs to 83 residues: Putative membrane protein insertion efficiency factor (83 aa).

It belongs to the UPF0161 family.

It is found in the cell membrane. Could be involved in insertion of integral membrane proteins into the membrane. The polypeptide is Putative membrane protein insertion efficiency factor (Streptococcus thermophilus (strain ATCC BAA-250 / LMG 18311)).